A 367-amino-acid chain; its full sequence is Ferrochelatase (367 aa).

His226 and Glu307 together coordinate Fe cation.

The protein belongs to the ferrochelatase family.

It localises to the cytoplasm. It catalyses the reaction heme b + 2 H(+) = protoporphyrin IX + Fe(2+). It participates in porphyrin-containing compound metabolism; protoheme biosynthesis; protoheme from protoporphyrin-IX: step 1/1. Functionally, catalyzes the ferrous insertion into protoporphyrin IX. This chain is Ferrochelatase, found in Burkholderia pseudomallei (strain 668).